The primary structure comprises 510 residues: Maturase K (510 aa).

It belongs to the intron maturase 2 family. MatK subfamily.

Its subcellular location is the plastid. In terms of biological role, usually encoded in the trnK tRNA gene intron. Probably assists in splicing its own and other chloroplast group II introns. This chain is Maturase K, found in Bartsia alpina (Velvet bells).